Reading from the N-terminus, the 116-residue chain is NADPH-dependent 7-cyano-7-deazaguanine reductase (116 aa).

The Thioimide intermediate role is filled by cysteine 31. Aspartate 38 acts as the Proton donor in catalysis. Substrate is bound by residues isoleucine 53–leucine 55 and tyrosine 72–glutamate 73.

It belongs to the GTP cyclohydrolase I family. QueF type 1 subfamily.

It is found in the cytoplasm. It catalyses the reaction 7-aminomethyl-7-carbaguanine + 2 NADP(+) = 7-cyano-7-deazaguanine + 2 NADPH + 3 H(+). Its pathway is tRNA modification; tRNA-queuosine biosynthesis. Catalyzes the NADPH-dependent reduction of 7-cyano-7-deazaguanine (preQ0) to 7-aminomethyl-7-deazaguanine (preQ1). This is NADPH-dependent 7-cyano-7-deazaguanine reductase from Chlorobium luteolum (strain DSM 273 / BCRC 81028 / 2530) (Pelodictyon luteolum).